The chain runs to 859 residues: Leucine--tRNA ligase (859 aa).

The short motif at 42–52 (PYPSGKLHVGH) is the 'HIGH' region element. A 'KMSKS' region motif is present at residues 611–615 (KMSKS). K614 is an ATP binding site.

The protein belongs to the class-I aminoacyl-tRNA synthetase family.

The protein resides in the cytoplasm. The catalysed reaction is tRNA(Leu) + L-leucine + ATP = L-leucyl-tRNA(Leu) + AMP + diphosphate. This Fusobacterium nucleatum subsp. nucleatum (strain ATCC 25586 / DSM 15643 / BCRC 10681 / CIP 101130 / JCM 8532 / KCTC 2640 / LMG 13131 / VPI 4355) protein is Leucine--tRNA ligase.